The primary structure comprises 285 residues: Acetyl-coenzyme A carboxylase carboxyl transferase subunit beta 2 (285 aa).

Residues 1 to 20 (MAIRSLFSGNRKKKEDGQEK) form a disordered region. The CoA carboxyltransferase N-terminal domain occupies 26–285 (LMTKCPECRH…MHTKGGVQHV (260 aa)). Residues C30, C33, C49, and C52 each contribute to the Zn(2+) site. Residues 30–52 (CPECRHIQLTKELEKNHKVCTKC) form a C4-type zinc finger.

This sequence belongs to the AccD/PCCB family. In terms of assembly, acetyl-CoA carboxylase is a heterohexamer composed of biotin carboxyl carrier protein (AccB), biotin carboxylase (AccC) and two subunits each of ACCase subunit alpha (AccA) and ACCase subunit beta (AccD). The cofactor is Zn(2+).

The protein localises to the cytoplasm. The enzyme catalyses N(6)-carboxybiotinyl-L-lysyl-[protein] + acetyl-CoA = N(6)-biotinyl-L-lysyl-[protein] + malonyl-CoA. Its pathway is lipid metabolism; malonyl-CoA biosynthesis; malonyl-CoA from acetyl-CoA: step 1/1. Component of the acetyl coenzyme A carboxylase (ACC) complex. Biotin carboxylase (BC) catalyzes the carboxylation of biotin on its carrier protein (BCCP) and then the CO(2) group is transferred by the transcarboxylase to acetyl-CoA to form malonyl-CoA. The sequence is that of Acetyl-coenzyme A carboxylase carboxyl transferase subunit beta 2 from Lysinibacillus sphaericus (strain C3-41).